A 922-amino-acid polypeptide reads, in one-letter code: Translation initiation factor IF-2 (922 aa).

A disordered region spans residues 33–310 (KTASSTVQPP…SKRQKRNEYE (278 aa)). A compositionally biased stretch (low complexity) spans 75 to 87 (PAAKAAPKAAAKP). 2 stretches are compositionally biased toward pro residues: residues 88–98 (GPKPGPKPGPQ) and 140–150 (TPKPGAKPGPK). Composition is skewed to low complexity over residues 151 to 169 (PGGAKPGAKPGPKPGGRAP) and 202 to 211 (PGSRPGGAKK). 2 stretches are compositionally biased toward gly residues: residues 215 to 225 (KPGGAKQGGGR) and 248 to 292 (FGGG…GRPG). A compositionally biased stretch (basic residues) spans 296–305 (RKGRKSKRQK). In terms of domain architecture, tr-type G spans 418–590 (QRPPVVTVMG…VLLTADASLD (173 aa)). A G1 region spans residues 427–434 (GHVDHGKT). Position 427–434 (427–434 (GHVDHGKT)) interacts with GTP. The interval 452 to 456 (GITQH) is G2. Positions 477–480 (DTPG) are G3. GTP-binding positions include 477 to 481 (DTPGH) and 531 to 534 (NKID). Residues 531 to 534 (NKID) are G4. The G5 stretch occupies residues 567-569 (SAK).

It belongs to the TRAFAC class translation factor GTPase superfamily. Classic translation factor GTPase family. IF-2 subfamily.

It is found in the cytoplasm. Its function is as follows. One of the essential components for the initiation of protein synthesis. Protects formylmethionyl-tRNA from spontaneous hydrolysis and promotes its binding to the 30S ribosomal subunits. Also involved in the hydrolysis of GTP during the formation of the 70S ribosomal complex. This Corynebacterium jeikeium (strain K411) protein is Translation initiation factor IF-2.